Here is a 395-residue protein sequence, read N- to C-terminus: Cyclomarin C epoxidase CymV (395 aa).

It belongs to the cytochrome P450 family.

Functionally, cytochrome P450; part of the gene cluster that mediates the biosynthesis of cyclic heptapeptides, known as cyclomarins and also of cyclic dipeptides, called cyclomarazines, which have both antimicrobial and cytotoxic effects. First, CymD catalyzes the reverse N-prenylation of monomeric L-tryptophan with dimethylallyl diphosphate (DMAPP) to form N-(1,1-dimethylallyl)-tryptophan (r-N-DMAT). The N-(1,1-dimethylallyl)-tryptophan produced by CymD is then combined with a range of standard and nonproteinogenic amino acid substrates to synthesize the peptides, a process that is probably catalyzed by the non-canonical nonribosomal peptide synthetase (NRPS), CymA. Other proteins in the cluster catalyze further modifications of the peptides including CymV which catalyzes the oxidation of olefinic cyclomarins and cyclomarazines to their respective epoxide derivatives. The sequence is that of Cyclomarin C epoxidase CymV from Salinispora arenicola (strain CNS-205).